Here is a 137-residue protein sequence, read N- to C-terminus: MQRTLSIIKPDAVKKNVVGKIIDRFESNGLRIAAAKKVKLSKCDAKAFYAVHSERPFFNDLVEFMTSGPVVVMVLEGENAVAKNRELMGATNPKEAAAGTIRADFAESIDANAVHGSDSLENAINEINFFFAAREIC.

Residues Lys9, Phe57, Arg85, Thr91, Arg102, and Asn112 each coordinate ATP. His115 (pros-phosphohistidine intermediate) is an active-site residue.

The protein belongs to the NDK family. Homotetramer. It depends on Mg(2+) as a cofactor.

The protein resides in the cytoplasm. It carries out the reaction a 2'-deoxyribonucleoside 5'-diphosphate + ATP = a 2'-deoxyribonucleoside 5'-triphosphate + ADP. The catalysed reaction is a ribonucleoside 5'-diphosphate + ATP = a ribonucleoside 5'-triphosphate + ADP. Functionally, major role in the synthesis of nucleoside triphosphates other than ATP. The ATP gamma phosphate is transferred to the NDP beta phosphate via a ping-pong mechanism, using a phosphorylated active-site intermediate. The sequence is that of Nucleoside diphosphate kinase from Campylobacter curvus (strain 525.92).